The following is a 218-amino-acid chain: Thiopurine S-methyltransferase (218 aa).

S-adenosyl-L-methionine-binding residues include Trp10, Leu45, Glu66, and Arg123.

It belongs to the class I-like SAM-binding methyltransferase superfamily. TPMT family.

The protein localises to the cytoplasm. It catalyses the reaction S-adenosyl-L-methionine + a thiopurine = S-adenosyl-L-homocysteine + a thiopurine S-methylether.. The polypeptide is Thiopurine S-methyltransferase (Pseudomonas aeruginosa (strain LESB58)).